The primary structure comprises 206 residues: Heat shock protein beta-1 (206 aa).

Arginine 12 carries the omega-N-methylarginine modification. Serine 13 is subject to Phosphoserine. At serine 15 the chain carries Phosphoserine; by MAPKAPK2 and MAPKAPK3. Serine 27 bears the Phosphoserine mark. The tract at residues 74 to 206 (RPAFSRALNR…GPESEQSGAK (133 aa)) is interaction with TGFB1I1. A sHSP domain is found at 80–188 (ALNRQLSSGV…QSAEITIPVT (109 aa)). Residue serine 86 is modified to Phosphoserine; by MAPKAPK2, MAPKAPK3 and MAPKAPK5. 3 positions are modified to phosphoserine: serine 87, serine 90, and serine 102. Lysine 127 carries the post-translational modification N6-acetyllysine. Threonine 178 is modified (phosphothreonine). Phosphoserine is present on residues serine 180 and serine 200.

The protein belongs to the small heat shock protein (HSP20) family. In terms of assembly, homooligomer. Homodimer; becomes monomeric upon activation. Heterooligomer; with HSPB6. Associates with alpha- and beta-tubulin. Interacts with TGFB1I1. Interacts with CRYAB. Interacts with HSPB8. Interacts with HSPBAP1. In terms of processing, phosphorylated upon exposure to protein kinase C activators and heat shock. Phosphorylation by MAPKAPK2 and MAPKAPK3 in response to stress dissociates HSPB1 from large small heat-shock protein (sHsps) oligomers and impairs its chaperone activity and ability to protect against oxidative stress effectively. Phosphorylation by MAPKAPK5 in response to PKA stimulation induces F-actin rearrangement. As to expression, expressed in a variety of tissues. High levels in lung, adrenal, xiphoid, adipose tissue, heart and striated and smooth muscle, lower levels in the CNS. Adult levels are much higher in the slow-twitch soleus muscle than in the fast-twitch rectus femoris and extensor digitorum muscles.

It localises to the cytoplasm. The protein resides in the nucleus. The protein localises to the cytoskeleton. It is found in the spindle. In terms of biological role, small heat shock protein which functions as a molecular chaperone probably maintaining denatured proteins in a folding-competent state. Plays a role in stress resistance and actin organization. Through its molecular chaperone activity may regulate numerous biological processes including the phosphorylation and the axonal transport of neurofilament proteins. The sequence is that of Heat shock protein beta-1 (Hspb1) from Rattus norvegicus (Rat).